Reading from the N-terminus, the 315-residue chain is Taste receptor type 2 member 129 (315 aa).

At 1–9 (MDGIIQIIS) the chain is on the extracellular side. A helical transmembrane segment spans residues 10–30 (AFIVIIEIIIGWFGNGFIVLV). The Cytoplasmic segment spans residues 31-46 (NCMHWIKRRRISTVNQ). The helical transmembrane segment at 47–67 (ILTALAFSRIYLLLTVFTVIL) threads the bilayer. Topologically, residues 68-101 (ASVQYSNILVTRREVKVIIFHLITSNHFSMWLAA) are extracellular. A helical membrane pass occupies residues 102-122 (CLGLFYFLKIANFSNFIFVFL). Topologically, residues 123–128 (KKRVNK) are cytoplasmic. A helical membrane pass occupies residues 129 to 149 (VVSGTLLMSLVFLFLNTLLIN). Over 150–185 (SYIDAQIDDYRGYLLYDFTSNITVSFYRVILVINNC) the chain is Extracellular. Asn-170 carries N-linked (GlcNAc...) asparagine glycosylation. The helical transmembrane segment at 186-206 (IFTSIPFALSQSTFLMLIFSL) threads the bilayer. Residues 207 to 233 (WRHYKKMQQHAQRCRDTLTNAHIKVLQ) are Cytoplasmic-facing. Residues 234–254 (TMIMYVLLSAIFFLFLSMQIW) form a helical membrane-spanning segment. Residues 255–266 (RNKLMENILFIR) lie on the Extracellular side of the membrane. The chain crosses the membrane as a helical span at residues 267-287 (FCETVAAVFPSGHSCVLIWGD). The Cytoplasmic segment spans residues 288 to 315 (TNLRQTFLSVLWWLKHRFTLWVPKLYCR).

This sequence belongs to the G-protein coupled receptor T2R family.

The protein resides in the membrane. Functionally, putative taste receptor which may play a role in the perception of bitterness. The polypeptide is Taste receptor type 2 member 129 (Rattus norvegicus (Rat)).